Consider the following 436-residue polypeptide: Hydrogenobyrinate a,c-diamide synthase (436 aa).

One can recognise a GATase cobBQ-type domain in the interval 244–435 (HIAVARDDAF…MHVIDFCGEK (192 aa)). Catalysis depends on C327, which acts as the Nucleophile.

It belongs to the CobB/CbiA family. Mg(2+) is required as a cofactor.

The catalysed reaction is hydrogenobyrinate + 2 L-glutamine + 2 ATP + 2 H2O = hydrogenobyrinate a,c-diamide + 2 L-glutamate + 2 ADP + 2 phosphate + 2 H(+). Its pathway is cofactor biosynthesis; adenosylcobalamin biosynthesis; cob(II)yrinate a,c-diamide from precorrin-2 (aerobic route): step 9/10. Its function is as follows. Catalyzes the ATP-dependent amidation of the two carboxylate groups at positions a and c of hydrogenobyrinate, using either L-glutamine or ammonia as the nitrogen source. The chain is Hydrogenobyrinate a,c-diamide synthase from Brucella anthropi (strain ATCC 49188 / DSM 6882 / CCUG 24695 / JCM 21032 / LMG 3331 / NBRC 15819 / NCTC 12168 / Alc 37) (Ochrobactrum anthropi).